Reading from the N-terminus, the 99-residue chain is Large ribosomal subunit protein uL23 (99 aa).

Belongs to the universal ribosomal protein uL23 family. Part of the 50S ribosomal subunit. Contacts protein L29, and trigger factor when it is bound to the ribosome.

Functionally, one of the early assembly proteins it binds 23S rRNA. One of the proteins that surrounds the polypeptide exit tunnel on the outside of the ribosome. Forms the main docking site for trigger factor binding to the ribosome. The polypeptide is Large ribosomal subunit protein uL23 (Leifsonia xyli subsp. xyli (strain CTCB07)).